The chain runs to 186 residues: Riboflavin kinase (186 aa).

Mg(2+)-binding residues include Thr-42 and Asn-44. The Nucleophile role is filled by Glu-123.

The protein belongs to the flavokinase family. Requires Zn(2+) as cofactor. Mg(2+) is required as a cofactor.

The enzyme catalyses riboflavin + ATP = FMN + ADP + H(+). It participates in cofactor biosynthesis; FMN biosynthesis; FMN from riboflavin (ATP route): step 1/1. Its function is as follows. Catalyzes the phosphorylation of riboflavin (vitamin B2) to form flavin mononucleotide (FMN) coenzyme. This Eremothecium gossypii (strain ATCC 10895 / CBS 109.51 / FGSC 9923 / NRRL Y-1056) (Yeast) protein is Riboflavin kinase (FMN1).